We begin with the raw amino-acid sequence, 67 residues long: Sperm protamine P1 (67 aa).

The interval 1 to 67 (MASYRNSRSR…RRRKRNNENK (67 aa)) is disordered. Basic residues-rich tracts occupy residues 7-25 (SRSR…RSRV) and 34-67 (RSSR…NENK).

The protein belongs to the protamine P1 family. As to expression, testis.

It localises to the nucleus. Its subcellular location is the chromosome. Protamines substitute for histones in the chromatin of sperm during the haploid phase of spermatogenesis. They compact sperm DNA into a highly condensed, stable and inactive complex. In Isoodon macrourus (Short-nosed bandicoot), this protein is Sperm protamine P1 (PRM1).